The sequence spans 119 residues: Large ribosomal subunit protein bL20 (119 aa).

Belongs to the bacterial ribosomal protein bL20 family.

Binds directly to 23S ribosomal RNA and is necessary for the in vitro assembly process of the 50S ribosomal subunit. It is not involved in the protein synthesizing functions of that subunit. The polypeptide is Large ribosomal subunit protein bL20 (Burkholderia cenocepacia (strain HI2424)).